A 210-amino-acid polypeptide reads, in one-letter code: MTSQTHTLPPLPYAYDALEPVISKQIMELHHQKHHQTYINNLNAALSAQASATASNDVPTLISLQQKLRFNGGGHINHSLFWKNLTPPGTPANDIAGAPALREAIVSRWGSHEAFVKAFGAELLGLQGSGWGWLVSKGGAKGRLEIVTTKDQDPVNAPDVPVFGVDMWEHAYYLQYLNNKAGYVEGIWKIIHWAEAEKRYTAGVENPLKL.

Mn(2+) is bound by residues His30, His78, Asp166, and His170.

It belongs to the iron/manganese superoxide dismutase family. As to quaternary structure, homotetramer. The cofactor is Mn(2+). The N-terminus is blocked.

The protein resides in the mitochondrion matrix. It catalyses the reaction 2 superoxide + 2 H(+) = H2O2 + O2. In terms of biological role, destroys superoxide anion radicals which are normally produced within the cells and which are toxic to biological systems. In Penicillium chrysogenum (Penicillium notatum), this protein is Superoxide dismutase [Mn], mitochondrial (SOD).